A 727-amino-acid chain; its full sequence is Translation initiation factor IF-2, mitochondrial (727 aa).

A mitochondrion-targeting transit peptide spans 1 to 29 (MNQKLLKLENLLRFHTICRQVHSPSQRRL). The tr-type G domain maps to 178–346 (PRSPVVTVMG…ATIALAEILE (169 aa)). Positions 187–194 (GHVDHGKT) are G1. A GTP-binding site is contributed by 187 to 194 (GHVDHGKT). The G2 stretch occupies residues 212-216 (GITQH). Residues 234 to 237 (DTPG) and 288 to 291 (NKCD) contribute to the GTP site. The segment at 234 to 237 (DTPG) is G3. The tract at residues 288–291 (NKCD) is G4. The tract at residues 324–326 (SAL) is G5. The residue at position 688 (T688) is a Phosphothreonine.

Belongs to the TRAFAC class translation factor GTPase superfamily. Classic translation factor GTPase family. IF-2 subfamily. Monomer.

The protein localises to the mitochondrion. One of the essential components for the initiation of protein synthesis. Protects formylmethionyl-tRNA from spontaneous hydrolysis and promotes its binding to the 30S ribosomal subunits. Also involved in the hydrolysis of GTP during the formation of the 70S ribosomal complex. The chain is Translation initiation factor IF-2, mitochondrial (Mtif2) from Mus musculus (Mouse).